The primary structure comprises 360 residues: Peptide chain release factor 1 (360 aa).

Glutamine 233 carries the N5-methylglutamine modification. The segment at 286–305 (NEIAQERKSQVGTGDRSERI) is disordered.

It belongs to the prokaryotic/mitochondrial release factor family. Post-translationally, methylated by PrmC. Methylation increases the termination efficiency of RF1.

The protein resides in the cytoplasm. In terms of biological role, peptide chain release factor 1 directs the termination of translation in response to the peptide chain termination codons UAG and UAA. The chain is Peptide chain release factor 1 from Acetivibrio thermocellus (strain ATCC 27405 / DSM 1237 / JCM 9322 / NBRC 103400 / NCIMB 10682 / NRRL B-4536 / VPI 7372) (Clostridium thermocellum).